Consider the following 793-residue polypeptide: Protein zer-1 homolog (793 aa).

3 LRR repeats span residues 84–108 (RTSL…LMRH), 187–210 (LHDL…ALGS), and 269–294 (LRHL…ESTT).

The protein belongs to the zyg-11 family.

Its function is as follows. Serves as substrate adapter subunit in an E3 ubiquitin ligase complex CG12084-cul-2-elongin BC. Targets substrates bearing N-terminal glycine degrons for proteasomal degradation. In Drosophila melanogaster (Fruit fly), this protein is Protein zer-1 homolog.